Consider the following 258-residue polypeptide: Imidazole glycerol phosphate synthase subunit HisF (258 aa).

Residues aspartate 11 and aspartate 130 contribute to the active site.

The protein belongs to the HisA/HisF family. As to quaternary structure, heterodimer of HisH and HisF.

The protein resides in the cytoplasm. The catalysed reaction is 5-[(5-phospho-1-deoxy-D-ribulos-1-ylimino)methylamino]-1-(5-phospho-beta-D-ribosyl)imidazole-4-carboxamide + L-glutamine = D-erythro-1-(imidazol-4-yl)glycerol 3-phosphate + 5-amino-1-(5-phospho-beta-D-ribosyl)imidazole-4-carboxamide + L-glutamate + H(+). It functions in the pathway amino-acid biosynthesis; L-histidine biosynthesis; L-histidine from 5-phospho-alpha-D-ribose 1-diphosphate: step 5/9. In terms of biological role, IGPS catalyzes the conversion of PRFAR and glutamine to IGP, AICAR and glutamate. The HisF subunit catalyzes the cyclization activity that produces IGP and AICAR from PRFAR using the ammonia provided by the HisH subunit. The sequence is that of Imidazole glycerol phosphate synthase subunit HisF from Rhodopseudomonas palustris (strain BisB18).